Here is a 412-residue protein sequence, read N- to C-terminus: Imidazolonepropionase (412 aa).

The Fe(3+) site is built by His-76 and His-78. Zn(2+)-binding residues include His-76 and His-78. The 4-imidazolone-5-propanoate site is built by Arg-85, Tyr-148, and His-181. Tyr-148 is an N-formimidoyl-L-glutamate binding site. A Fe(3+)-binding site is contributed by His-242. His-242 contacts Zn(2+). Glu-245 is a 4-imidazolone-5-propanoate binding site. Asp-317 contacts Fe(3+). Position 317 (Asp-317) interacts with Zn(2+). 2 residues coordinate N-formimidoyl-L-glutamate: Asn-319 and Gly-321. 4-imidazolone-5-propanoate is bound at residue Ser-322.

Belongs to the metallo-dependent hydrolases superfamily. HutI family. Requires Zn(2+) as cofactor. Fe(3+) serves as cofactor.

The protein localises to the cytoplasm. It carries out the reaction 4-imidazolone-5-propanoate + H2O = N-formimidoyl-L-glutamate. The protein operates within amino-acid degradation; L-histidine degradation into L-glutamate; N-formimidoyl-L-glutamate from L-histidine: step 3/3. In terms of biological role, catalyzes the hydrolytic cleavage of the carbon-nitrogen bond in imidazolone-5-propanoate to yield N-formimidoyl-L-glutamate. It is the third step in the universal histidine degradation pathway. This Staphylococcus aureus (strain Mu50 / ATCC 700699) protein is Imidazolonepropionase.